The chain runs to 369 residues: Protein-glutamate methylesterase/protein-glutamine glutaminase of group 3 operon (369 aa).

The Response regulatory domain occupies 11–128 (RVLIVDDSAA…DLERQEASIR (118 aa)). Aspartate 62 bears the 4-aspartylphosphate mark. The segment at 136–168 (ATETTRRRSQPEPRPLAPGPKLTADEILPARPP) is disordered. The 189-residue stretch at 170 to 358 (PVPETMPVVC…LDRLAARIME (189 aa)) folds into the CheB-type methylesterase domain. Catalysis depends on residues serine 183, histidine 209, and aspartate 305.

It belongs to the CheB family. Post-translationally, phosphorylated in vitro by CheA2, but not by CheA1. Phosphorylation of the N-terminal regulatory domain activates the methylesterase activity.

Its subcellular location is the cytoplasm. The catalysed reaction is [protein]-L-glutamate 5-O-methyl ester + H2O = L-glutamyl-[protein] + methanol + H(+). It carries out the reaction L-glutaminyl-[protein] + H2O = L-glutamyl-[protein] + NH4(+). Its function is as follows. Involved in chemotaxis. Part of a chemotaxis signal transduction system that modulates chemotaxis in response to various stimuli. Catalyzes the demethylation of specific methylglutamate residues introduced into the chemoreceptors (methyl-accepting chemotaxis proteins or MCP) by CheR. Also mediates the irreversible deamidation of specific glutamine residues to glutamic acid. The polypeptide is Protein-glutamate methylesterase/protein-glutamine glutaminase of group 3 operon (cheB3) (Cereibacter sphaeroides (Rhodobacter sphaeroides)).